The chain runs to 876 residues: Alanine--tRNA ligase (876 aa).

The Zn(2+) site is built by histidine 564, histidine 568, cysteine 666, and histidine 670.

Belongs to the class-II aminoacyl-tRNA synthetase family. In terms of assembly, homotetramer. Zn(2+) is required as a cofactor.

It localises to the cytoplasm. The enzyme catalyses tRNA(Ala) + L-alanine + ATP = L-alanyl-tRNA(Ala) + AMP + diphosphate. Catalyzes the attachment of alanine to tRNA(Ala) in a two-step reaction: alanine is first activated by ATP to form Ala-AMP and then transferred to the acceptor end of tRNA(Ala). Also edits incorrectly charged Ser-tRNA(Ala) and Gly-tRNA(Ala) via its editing domain. The chain is Alanine--tRNA ligase from Salmonella paratyphi A (strain ATCC 9150 / SARB42).